The following is a 187-amino-acid chain: Elongation factor P (187 aa).

This sequence belongs to the elongation factor P family.

It is found in the cytoplasm. It participates in protein biosynthesis; polypeptide chain elongation. Involved in peptide bond synthesis. Stimulates efficient translation and peptide-bond synthesis on native or reconstituted 70S ribosomes in vitro. Probably functions indirectly by altering the affinity of the ribosome for aminoacyl-tRNA, thus increasing their reactivity as acceptors for peptidyl transferase. This chain is Elongation factor P, found in Mycoplasmopsis pulmonis (strain UAB CTIP) (Mycoplasma pulmonis).